The sequence spans 188 residues: Ribosome maturation factor RimM (188 aa).

A PRC barrel domain is found at 96–169; the sequence is DDEFYYADLE…RILIDPMAAG (74 aa).

It belongs to the RimM family. As to quaternary structure, binds ribosomal protein uS19.

It localises to the cytoplasm. An accessory protein needed during the final step in the assembly of 30S ribosomal subunit, possibly for assembly of the head region. Essential for efficient processing of 16S rRNA. May be needed both before and after RbfA during the maturation of 16S rRNA. It has affinity for free ribosomal 30S subunits but not for 70S ribosomes. This is Ribosome maturation factor RimM from Agrobacterium fabrum (strain C58 / ATCC 33970) (Agrobacterium tumefaciens (strain C58)).